Reading from the N-terminus, the 314-residue chain is tRNA pseudouridine synthase B (314 aa).

The Nucleophile role is filled by D41.

Belongs to the pseudouridine synthase TruB family. Type 1 subfamily.

It catalyses the reaction uridine(55) in tRNA = pseudouridine(55) in tRNA. In terms of biological role, responsible for synthesis of pseudouridine from uracil-55 in the psi GC loop of transfer RNAs. In Prochlorococcus marinus (strain NATL2A), this protein is tRNA pseudouridine synthase B.